Here is a 154-residue protein sequence, read N- to C-terminus: MAVHKEVNFVAYLLIVLGLLVLVSAMEHVDAKACTLECGNLGFGICPRSEGSPENRICTNCCAGYKGCNYYSANGAFICEGESDPKKPKACPRNCDPHIAYSKCPRSEGKSLIYPTGCTTCCTGYKGCYYFGKNGKFVCEGESDEPKANMYPAM.

The N-terminal stretch at M1–A25 is a signal peptide. 2 consecutive repeat copies span residues A31–K87 and P88–K147. 8 disulfides stabilise this stretch: C34-C122, C38-C118, C46-C128, C58-C95, C61-C79, C62-C91, C68-C104, and C121-C139.

Belongs to the protease inhibitor I20 (potato type II proteinase inhibitor) family.

This is Proteinase inhibitor type-2 P303.51 from Solanum tuberosum (Potato).